The primary structure comprises 753 residues: CCR4-NOT transcription complex subunit 3 (753 aa).

The tract at residues 240 to 534 (ATSPPSHSHM…PPQFSTAPEI (295 aa)) is disordered. The segment covering 257–268 (SSSTPTSTTSSS) has biased composition (low complexity). The segment covering 284-293 (DDKKRGRSTD) has biased composition (basic and acidic residues). T292 carries the phosphothreonine modification. Polar residues predominate over residues 294-315 (SEVSQSPAKNGSKPVHSNQHPQ). Residue S299 is modified to Phosphoserine. The span at 317 to 330 (PAVPPTYPSGPPPA) shows a compositional bias: pro residues. The span at 350-376 (PSALGPKASPAPSHNSGTPAPYAQAVA) shows a compositional bias: low complexity. Positions 396–408 (SGGGGGGSGGGGS) are enriched in gly residues. Over residues 424–433 (NGATSYSSVV) the composition is skewed to polar residues. A compositionally biased stretch (low complexity) spans 441–457 (ALSSSGGNNASSQALGP). The segment covering 458–467 (PSGPHNPPPS) has biased composition (pro residues). Residues 479 to 491 (GAGGVAPGSGNNS) show a composition bias toward gly residues. Position 542 is a phosphoserine (S542). The interval 661 to 753 (EFYQRLSTET…YRYLEDRDLQ (93 aa)) is repressor domain.

It belongs to the CNOT2/3/5 family. Component of the CCR4-NOT complex; distinct complexes seem to exist that differ in the participation of probably mutually exclusive catalytic subunits. In the complex interacts directly with CNOT2. Interacts with TIP120B and NANOS2. Interacts with EBF1. Interacts in an RNA-independent manner with BICC1 (via KH domains). Ubiquitous. Highly expressed in brain, heart, thymus, spleen, kidney, liver, small intestine, lung and peripheral blood leukocytes.

It is found in the cytoplasm. The protein resides in the nucleus. Its subcellular location is the P-body. Its function is as follows. Component of the CCR4-NOT complex which is one of the major cellular mRNA deadenylases and is linked to various cellular processes including bulk mRNA degradation, miRNA-mediated repression, translational repression during translational initiation and general transcription regulation. Additional complex functions may be a consequence of its influence on mRNA expression. May be involved in metabolic regulation; may be involved in recruitment of the CCR4-NOT complex to deadenylation target mRNAs involved in energy metabolism. Involved in mitotic progression and regulation of the spindle assembly checkpoint by regulating the stability of MAD1L1 mRNA. Can repress transcription and may link the CCR4-NOT complex to transcriptional regulation; the repressive function may involve histone deacetylases. Involved in the maintenance of embryonic stem (ES) cell identity. The sequence is that of CCR4-NOT transcription complex subunit 3 from Homo sapiens (Human).